A 325-amino-acid chain; its full sequence is MQIFDYDNILLLPRKCRVESRSECDASVTLGARSFRLPVVPANMKTVVDEPICLWLAQNGYFYVMHRFDLDNVKFVKQMHAKGVFASISLGVKKPDYDTVDQLVAEGLVPEYITIDIAHGHADSVKNMIGYLKQKLPGSFVIAGNIGTPEAVIDLENWGADATKVGIGPGKVCITKLKTGFGTGGWQLSALKWCARVATKPIIADGGIRDHGDIAKSVRFGASMVMIGSLFAGHEESPGRTVEVDGALFKEYYGSASDFNKGEYKHVEGKRILEPIKGKLADTLIEMEQDVQSSISYAGGRALMDIRKVNYVTLGGDNAGEHLLM.

C173 serves as the catalytic Thioimidate intermediate. NADP(+) is bound at residue I202–V225.

This sequence belongs to the IMPDH/GMPR family. GuaC type 2 subfamily.

The catalysed reaction is IMP + NH4(+) + NADP(+) = GMP + NADPH + 2 H(+). Its function is as follows. Catalyzes the irreversible NADPH-dependent deamination of GMP to IMP. It functions in the conversion of nucleobase, nucleoside and nucleotide derivatives of G to A nucleotides, and in maintaining the intracellular balance of A and G nucleotides. In Variovorax paradoxus (strain S110), this protein is GMP reductase.